The chain runs to 348 residues: L-threonine 3-dehydrogenase (348 aa).

Position 42 (C42) interacts with Zn(2+). Residues T44 and H47 each act as charge relay system in the active site. 6 residues coordinate Zn(2+): H67, E68, C97, C100, C103, and C111. NAD(+)-binding positions include L179, E199, R204, 266–268, and 291–292; these read LGL and IT.

Belongs to the zinc-containing alcohol dehydrogenase family. Homotetramer. Zn(2+) serves as cofactor.

The protein resides in the cytoplasm. It catalyses the reaction L-threonine + NAD(+) = (2S)-2-amino-3-oxobutanoate + NADH + H(+). It functions in the pathway amino-acid degradation; L-threonine degradation via oxydo-reductase pathway; glycine from L-threonine: step 1/2. Functionally, catalyzes the NAD(+)-dependent oxidation of L-threonine to 2-amino-3-ketobutyrate. In Pyrococcus abyssi (strain GE5 / Orsay), this protein is L-threonine 3-dehydrogenase.